A 142-amino-acid polypeptide reads, in one-letter code: Putative tyrosine phosphatase 123R (142 aa).

A Tyrosine-protein phosphatase domain is found at 2–137; that stretch reads EPTKIVENLY…LAQFERWLNS (136 aa). Catalysis depends on Cys81, which acts as the Phosphocysteine intermediate.

Belongs to the protein-tyrosine phosphatase family.

The sequence is that of Putative tyrosine phosphatase 123R from Invertebrate iridescent virus 6 (IIV-6).